We begin with the raw amino-acid sequence, 280 residues long: Energy-coupling factor transporter ATP-binding protein EcfA2 (280 aa).

Residues 3 to 245 (INLQNVSYTY…VSLLEKKQLG (243 aa)) enclose the ABC transporter domain. Residue 40 to 47 (GHTGSGKS) coordinates ATP.

Belongs to the ABC transporter superfamily. Energy-coupling factor EcfA family. In terms of assembly, forms a stable energy-coupling factor (ECF) transporter complex composed of 2 membrane-embedded substrate-binding proteins (S component), 2 ATP-binding proteins (A component) and 2 transmembrane proteins (T component).

The protein resides in the cell membrane. In terms of biological role, ATP-binding (A) component of a common energy-coupling factor (ECF) ABC-transporter complex. Unlike classic ABC transporters this ECF transporter provides the energy necessary to transport a number of different substrates. This chain is Energy-coupling factor transporter ATP-binding protein EcfA2, found in Streptococcus pyogenes serotype M3 (strain ATCC BAA-595 / MGAS315).